Reading from the N-terminus, the 425-residue chain is MQHNSYRRWITLAIISFSGGVSFDLAYLRYIYQIPMAKFMGFSNTEIGLIMSTFGIAAIILYAPSGVIADKFSHRKMITSAMIITGLLGLLMATYPPLWVMLCIQIAFAITTILMLWSVSIKAASLLGDHSEQGKIMGWMEGLRGVGVMSLAVFTMWVFSRFAPDDSTSLKTVIIIYSVVYILLGILCWFFVSDNNNLRSANNEEKQSFQLSDILAVLRISTTWYCSMVIFGVFTIYAILSYSTNYLTEMYGMSLVAASYMGIVINKIFRALCGPLGGIITTYSKVKSPTRVIQILSVLGLLTLTALLVTNSNPQSVAMGIGLILLLGFTCYASRGLYWACPGEARTPSYIMGTTVGICSVIGFLPDVFVYPIIGHWQDTLPAAEAYRNMWLMGMAALGMVIVFTFLLFQKIRTADSAPAMASSK.

Topologically, residues 1–8 are cytoplasmic; it reads MQHNSYRR. The chain crosses the membrane as a helical span at residues 9–29; sequence WITLAIISFSGGVSFDLAYLR. The Periplasmic segment spans residues 30-48; sequence YIYQIPMAKFMGFSNTEIG. Residues 49-69 form a helical membrane-spanning segment; that stretch reads LIMSTFGIAAIILYAPSGVIA. The Cytoplasmic portion of the chain corresponds to 70 to 75; the sequence is DKFSHR. 2 helical membrane-spanning segments follow: residues 76 to 96 and 97 to 117; these read KMIT…ATYP and PLWV…LMLW. The Cytoplasmic segment spans residues 118–138; the sequence is SVSIKAASLLGDHSEQGKIMG. Residues 139–159 form a helical membrane-spanning segment; that stretch reads WMEGLRGVGVMSLAVFTMWVF. The Periplasmic segment spans residues 160-171; it reads SRFAPDDSTSLK. The chain crosses the membrane as a helical span at residues 172–192; it reads TVIIIYSVVYILLGILCWFFV. Over 193 to 219 the chain is Cytoplasmic; that stretch reads SDNNNLRSANNEEKQSFQLSDILAVLR. A helical transmembrane segment spans residues 220–240; the sequence is ISTTWYCSMVIFGVFTIYAIL. The Periplasmic portion of the chain corresponds to 241–259; sequence SYSTNYLTEMYGMSLVAAS. Residues 260 to 280 form a helical membrane-spanning segment; that stretch reads YMGIVINKIFRALCGPLGGII. Topologically, residues 281-291 are cytoplasmic; the sequence is TTYSKVKSPTR. The chain crosses the membrane as a helical span at residues 292-312; it reads VIQILSVLGLLTLTALLVTNS. Residue Asn-313 is a topological domain, periplasmic. A helical membrane pass occupies residues 314-334; the sequence is PQSVAMGIGLILLLGFTCYAS. At 335–354 the chain is on the cytoplasmic side; sequence RGLYWACPGEARTPSYIMGT. The helical transmembrane segment at 355-375 threads the bilayer; sequence TVGICSVIGFLPDVFVYPIIG. The Periplasmic portion of the chain corresponds to 376–388; sequence HWQDTLPAAEAYR. A helical membrane pass occupies residues 389–409; the sequence is NMWLMGMAALGMVIVFTFLLF. Residues 410–425 lie on the Cytoplasmic side of the membrane; it reads QKIRTADSAPAMASSK.

To E.coli YihN.

The protein resides in the cell inner membrane. In Escherichia coli (strain K12), this protein is Inner membrane protein YqcE (yqcE).